A 239-amino-acid polypeptide reads, in one-letter code: Lytic polysaccharide monooxygenase-like protein X325 (239 aa).

Residues 1–24 (MVLPSSVSQWAALIALLCAGLANA) form the signal peptide. His25 is a binding site for Cu(2+). Residues Asn41, Asn56, Asn79, Asn117, Asn150, and Asn197 are each glycosylated (N-linked (GlcNAc...) asparagine). 2 disulfide bridges follow: Cys71–Cys176 and Cys141–Cys195. The GPI-anchor amidated serine moiety is linked to residue Ser214. Positions 215–239 (AAAPKSSLMSVLPVYMVALLSWAMM) are cleaved as a propeptide — removed in mature form.

The protein belongs to the X325 family. The cofactor is Cu(2+).

It localises to the cell membrane. Lytic polysaccharide monooxygenase-like protein that has diverged to biological functions other than polysaccharide degradation since it does not perform oxidative cleavage of polysaccharides. Acts as a cell surface-bound protein that functions in the copper-accumulation pathway. May also act as the major cell wall sensor that regulates MAP kinase-dependent hyphal anastomosis, the fusion of hyphal cells. The protein is Lytic polysaccharide monooxygenase-like protein X325 of Aspergillus fumigatus (strain ATCC MYA-4609 / CBS 101355 / FGSC A1100 / Af293) (Neosartorya fumigata).